The following is a 201-amino-acid chain: CMRF35-like molecule 7 (201 aa).

A signal peptide spans 1–17 (MWLPPALLLLSLSGCFS). In terms of domain architecture, Ig-like V-type spans 18 to 120 (IQGPESVRAP…PDLGTQVKVI (103 aa)). Residues 18–151 (IQGPESVRAP…FIGSHKRNHY (134 aa)) lie on the Extracellular side of the membrane. Cysteine 36 and cysteine 104 are disulfide-bonded. A helical membrane pass occupies residues 152-172 (MLLVFVKVPILLILVTAILWL). Topologically, residues 173-201 (KGSQRVPEEPGEQPIYMNFSEPLTKDMAT) are cytoplasmic. Tyrosine 188 is subject to Phosphotyrosine; by FYN.

Belongs to the CD300 family. As to quaternary structure, interacts with TYROBP, which enhances cell surface expression and activation properties. Interacts with GRB2 in the presence of FYN. Phosphorylation on Tyr-188 by FYN is required for interaction with GRB2. In terms of tissue distribution, expressed exclusively in myeloid lineages.

It is found in the cell membrane. Its function is as follows. Acts as an activating immune receptor through its interaction with ITAM-bearing adapter TYROBP, and also independently by recruitment of GRB2. The chain is CMRF35-like molecule 7 (CD300LB) from Homo sapiens (Human).